The following is a 573-amino-acid chain: 2-succinyl-5-enolpyruvyl-6-hydroxy-3-cyclohexene-1-carboxylate synthase (573 aa).

It belongs to the TPP enzyme family. MenD subfamily. Homodimer. Mg(2+) is required as a cofactor. Mn(2+) serves as cofactor. It depends on thiamine diphosphate as a cofactor.

It carries out the reaction isochorismate + 2-oxoglutarate + H(+) = 5-enolpyruvoyl-6-hydroxy-2-succinyl-cyclohex-3-ene-1-carboxylate + CO2. It participates in quinol/quinone metabolism; 1,4-dihydroxy-2-naphthoate biosynthesis; 1,4-dihydroxy-2-naphthoate from chorismate: step 2/7. The protein operates within quinol/quinone metabolism; menaquinone biosynthesis. In terms of biological role, catalyzes the thiamine diphosphate-dependent decarboxylation of 2-oxoglutarate and the subsequent addition of the resulting succinic semialdehyde-thiamine pyrophosphate anion to isochorismate to yield 2-succinyl-5-enolpyruvyl-6-hydroxy-3-cyclohexene-1-carboxylate (SEPHCHC). The sequence is that of 2-succinyl-5-enolpyruvyl-6-hydroxy-3-cyclohexene-1-carboxylate synthase from Shewanella baltica (strain OS195).